Reading from the N-terminus, the 335-residue chain is Protein PXR1 (335 aa).

The G-patch domain maps to 25 to 71 (KSRFGHKYLEKLGWEPGKGLGHASHAMSTHIKVTIKDDTMGLGAKLK). Positions 155 to 310 (DDAEDAKVSG…PPTISTRLSV (156 aa)) are disordered. Positions 163–175 (SGKHRDRKSRAKR) are enriched in basic residues. Residues 183–209 (LKEKCRDIDRTRKSKRKEKEQEKEKNR) show a composition bias toward basic and acidic residues. Positions 226–257 (KKDKKDKKEKKEKKEKKEKKEKKHKEKSNKRL) are enriched in basic residues.

It belongs to the PINX1 family.

It is found in the nucleus. The protein resides in the nucleolus. Involved in rRNA-processing at A0, A1 and A2 sites and negatively regulates telomerase. The chain is Protein PXR1 (PXR1) from Eremothecium gossypii (strain ATCC 10895 / CBS 109.51 / FGSC 9923 / NRRL Y-1056) (Yeast).